An 82-amino-acid chain; its full sequence is MKSQTVLISIFIFSFFALHQCMQMDVGEIEGSNKISIGKCVPAQCSVSFFKRDCWCCFRDQSMCSKTQKECESNPRCPPLKF.

Positions 1–23 are cleaved as a signal peptide; sequence MKSQTVLISIFIFSFFALHQCMQ. 4 cysteine pairs are disulfide-bonded: C40–C56, C45–C77, C54–C71, and C57–C64.

Belongs to the MEG family. In terms of tissue distribution, expressed exclusively in ovule embryo sacs and in early developing endosperms.

In terms of biological role, maternally-contributed central cell peptide regulating suspensor development and correct auxin distribution in early developing embryos. This chain is EMBRYO SURROUNDING FACTOR 1.2 (ESF1.2), found in Arabidopsis thaliana (Mouse-ear cress).